The following is a 221-amino-acid chain: uncharacterized protein (221 aa).

Residues 40–162 form a disordered region; sequence TIEVEPSPVQ…EPPEKVELSP (123 aa). Polar residues predominate over residues 47-60; it reads PVQQDNPPISSEQA. Low complexity predominate over residues 82–92; the sequence is SSAQQEATAQT.

This is an uncharacterized protein from Homo sapiens (Human).